Reading from the N-terminus, the 1052-residue chain is Calmin (1052 aa).

Residues M1–E288 form an actin-binding region. One can recognise a Calponin-homology (CH) 1 domain in the interval N32–Q139. Low complexity predominate over residues S148–S168. Positions S148–S178 are disordered. The Calponin-homology (CH) 2 domain maps to R187–P291. Disordered regions lie at residues S391–L420, K455–A545, S585–L727, and G758–I929. Basic and acidic residues-rich tracts occupy residues K455–G465 and V472–P495. Residues A509–G529 are compositionally biased toward polar residues. Position 537 is a phosphoserine (S537). 3 stretches are compositionally biased toward basic and acidic residues: residues P594–P614, P622–G651, and P659–K669. Phosphoserine is present on S679. Phosphothreonine is present on T710. The segment covering L711 to D720 has biased composition (basic and acidic residues). The residue at position 724 (S724) is a Phosphoserine. Positions E759–D773 are enriched in basic and acidic residues. Positions R780 to A791 are enriched in acidic residues. Over residues Q792–S801 the composition is skewed to low complexity. Residues S836 to G849 are compositionally biased toward basic and acidic residues. Phosphoserine is present on S856. A compositionally biased stretch (basic residues) spans S880 to M889. Residue S925 is modified to Phosphoserine. Residues V1027–L1047 traverse the membrane as a helical; Anchor for type IV membrane protein segment.

In terms of tissue distribution, expressed in testis. Expressed during testis maturation process and in maturing spermatids. In brain, it is expressed in neurons of the hippocampus, cerebral cortex, and thalamus, Purkinje cells, and also in the choroid plexus and ependymal cells. Expressed predominantly in dendrites and cell bodies of the neurons, but not in axons. The level of expression increases during the period of maturation of the mouse brain after birth.

The protein localises to the membrane. The protein resides in the cytoplasm. The chain is Calmin (Clmn) from Mus musculus (Mouse).